A 271-amino-acid chain; its full sequence is Ribosomal RNA small subunit methyltransferase A (271 aa).

The S-adenosyl-L-methionine site is built by H11, L13, G38, E58, D86, and N101.

It belongs to the class I-like SAM-binding methyltransferase superfamily. rRNA adenine N(6)-methyltransferase family. RsmA subfamily.

Its subcellular location is the cytoplasm. It carries out the reaction adenosine(1518)/adenosine(1519) in 16S rRNA + 4 S-adenosyl-L-methionine = N(6)-dimethyladenosine(1518)/N(6)-dimethyladenosine(1519) in 16S rRNA + 4 S-adenosyl-L-homocysteine + 4 H(+). In terms of biological role, specifically dimethylates two adjacent adenosines (A1518 and A1519) in the loop of a conserved hairpin near the 3'-end of 16S rRNA in the 30S particle. May play a critical role in biogenesis of 30S subunits. The polypeptide is Ribosomal RNA small subunit methyltransferase A (Helicobacter pylori (strain HPAG1)).